The primary structure comprises 459 residues: Flavin-containing monooxygenase FMO GS-OX1 (459 aa).

17–22 lines the FAD pocket; it reads GAGAAG. 211–216 contributes to the NADP(+) binding site; it reads GNYASG.

Belongs to the FMO family. The cofactor is FAD. Mainly expressed in leaves. Low levels in flowers and seeds.

It catalyses the reaction a (Z)-omega-(methylsulfanyl)-N-sulfo-alkylhydroximate S-glucoside + NADPH + O2 + H(+) = a (Z)-omega-(methylsulfinyl)-alkyl-glucosinolate + NADP(+) + H2O. In terms of biological role, catalyzes the conversion of methylthioalkyl glucosinolates into methylsulfinylalkyl glucosinolates. Able to S-oxygenate both desulfo- and intact 4-methylthiobutyl glucosinolates, but no activity with methionine, dihomomethionine or 5-methylthiopentaldoxime. The protein is Flavin-containing monooxygenase FMO GS-OX1 (FMOGS-OX1) of Arabidopsis thaliana (Mouse-ear cress).